Reading from the N-terminus, the 248-residue chain is 2,3-bisphosphoglycerate-dependent phosphoglycerate mutase (248 aa).

Residues 8 to 15 (RHGESTWN), 21 to 22 (TG), Arg60, 87 to 90 (ERHY), Lys98, 114 to 115 (RR), and 183 to 184 (GN) contribute to the substrate site. His9 (tele-phosphohistidine intermediate) is an active-site residue. The active-site Proton donor/acceptor is the Glu87.

The protein belongs to the phosphoglycerate mutase family. BPG-dependent PGAM subfamily. In terms of assembly, homodimer.

It carries out the reaction (2R)-2-phosphoglycerate = (2R)-3-phosphoglycerate. The protein operates within carbohydrate degradation; glycolysis; pyruvate from D-glyceraldehyde 3-phosphate: step 3/5. Its function is as follows. Catalyzes the interconversion of 2-phosphoglycerate and 3-phosphoglycerate. This chain is 2,3-bisphosphoglycerate-dependent phosphoglycerate mutase, found in Ralstonia nicotianae (strain ATCC BAA-1114 / GMI1000) (Ralstonia solanacearum).